The sequence spans 236 residues: MAPLLLLFLLGGLCALFSLASSSPATKKCGDAKKRREEEGEEVVVVAKKRPEEEPRRPDPDADLGIVFSTFDHDGDGFITAAELEESLKRLGIAVSSAAEAAALVARVDANSDGLIDIHEFRELYDSIPKRRKSHQQHPLPSTAAADEEAAAADEEYEAEEEERDLREAFDVFDGNKDGLISAEELGTVLESLGLRQHGGRPAVAECRDMIRLVDSDGDGMVSFEEFKRMMTVVKA.

The disordered stretch occupies residues 43–64; the sequence is VVVVAKKRPEEEPRRPDPDADL. A compositionally biased stretch (basic and acidic residues) spans 49–60; it reads KRPEEEPRRPDP. EF-hand domains lie at 59–94 and 96–131; these read DPDADLGIVFSTFDHDGDGFITAAELEESLKRLGIA and SSAAEAAALVARVDANSDGLIDIHEFRELYDSIPKR. Ca(2+)-binding residues include aspartate 72, aspartate 74, aspartate 76, glutamate 83, aspartate 109, asparagine 111, aspartate 113, and glutamate 120. The interval 130–158 is disordered; the sequence is KRRKSHQQHPLPSTAAADEEAAAADEEYE. Residues 146 to 158 show a composition bias toward acidic residues; sequence ADEEAAAADEEYE. EF-hand domains are found at residues 161–196 and 202–236; these read EEERDLREAFDVFDGNKDGLISAEELGTVLESLGLR and PAVAECRDMIRLVDSDGDGMVSFEEFKRMMTVVKA. The Ca(2+) site is built by aspartate 174, asparagine 176, aspartate 178, glutamate 185, aspartate 215, aspartate 217, aspartate 219, methionine 221, and glutamate 226.

Its function is as follows. Potential calcium sensor. The polypeptide is Probable calcium-binding protein CML30 (CML30) (Oryza sativa subsp. japonica (Rice)).